Here is a 514-residue protein sequence, read N- to C-terminus: 2,3-bisphosphoglycerate-independent phosphoglycerate mutase (514 aa).

Residues D14 and S64 each coordinate Mn(2+). S64 acts as the Phosphoserine intermediate in catalysis. Substrate contacts are provided by residues H125, 155-156, R187, R193, 263-266, and K336; these read RD and RADR. Residues D403, H407, D444, H445, and H463 each contribute to the Mn(2+) site.

It belongs to the BPG-independent phosphoglycerate mutase family. Monomer. Mn(2+) is required as a cofactor.

It carries out the reaction (2R)-2-phosphoglycerate = (2R)-3-phosphoglycerate. It participates in carbohydrate degradation; glycolysis; pyruvate from D-glyceraldehyde 3-phosphate: step 3/5. Its function is as follows. Catalyzes the interconversion of 2-phosphoglycerate and 3-phosphoglycerate. The protein is 2,3-bisphosphoglycerate-independent phosphoglycerate mutase of Escherichia coli O1:K1 / APEC.